Reading from the N-terminus, the 72-residue chain is Protein CYSTEINE-RICH TRANSMEMBRANE MODULE 9 (72 aa).

Residues 1–22 are compositionally biased toward polar residues; it reads MNPSEQNHLSVEKPSQTSSGPY. Residues 1–46 are disordered; it reads MNPSEQNHLSVEKPSQTSSGPYTSPPPIGYPTRDAMVGDPPAAAVE. The helical transmembrane segment at 49 to 65 threads the bilayer; the sequence is SKGDGFWKGCCAAICCC.

Belongs to the CYSTM1 family. As to quaternary structure, heterodimers. Interacts with WIH1/CYSTM13. As to expression, mostly expressed in roots and flowers and, to a lower extent, in stems, siliques and leaves.

The protein resides in the cell membrane. It is found in the nucleus. Its function is as follows. Involved in resistance to abiotic stress. The sequence is that of Protein CYSTEINE-RICH TRANSMEMBRANE MODULE 9 from Arabidopsis thaliana (Mouse-ear cress).